Here is a 758-residue protein sequence, read N- to C-terminus: Peptide transporter CstA (758 aa).

A run of 16 helical transmembrane segments spans residues 42–62 (KIFFVAVAVIGALAWTVVAFF), 67–87 (VNAVWIVVAAGCTYIIGFRFY), 122–142 (VVFGHHFAAIAGAGPLVGPVL), 153–173 (IWIVVGAVLAGCVQDYLVLWI), 198–218 (ALVGIPVIITIVIAVLALVVV), 225–245 (PWGVFSIAMTIPIAIFMGCYL), 256–276 (VSLIGIGLLLLAVVSGDWVAH), 291–311 (LCWLLISYGFAASVLPVWLLL), 320–340 (FMKVGTIALLAIGVCAAHPII), 361–381 (LFPFLFITIACGALSGFHALI), 401–421 (YGGMMTESFVAVIALLTAAIL), 498–518 (GVGLKAFWYHFAIMFEALFIL), 561–581 (VVVAAWGSILLLGVTDPLGGI), 588–608 (FGIANQLLAGIALTVITVVVI), 615–635 (WAWIPGIPLLWDLAVTLTASW), and 687–707 (LSIVFVVVVVLVVVAGVIVAL).

It belongs to the peptide transporter carbon starvation (CstA) (TC 2.A.114) family.

It localises to the cell membrane. Involved in peptide utilization. This Mycobacterium tuberculosis (strain ATCC 25618 / H37Rv) protein is Peptide transporter CstA (cstA).